The chain runs to 264 residues: Indole-3-glycerol phosphate synthase (264 aa).

Belongs to the TrpC family.

It catalyses the reaction 1-(2-carboxyphenylamino)-1-deoxy-D-ribulose 5-phosphate + H(+) = (1S,2R)-1-C-(indol-3-yl)glycerol 3-phosphate + CO2 + H2O. Its pathway is amino-acid biosynthesis; L-tryptophan biosynthesis; L-tryptophan from chorismate: step 4/5. This chain is Indole-3-glycerol phosphate synthase, found in Rhizorhabdus wittichii (strain DSM 6014 / CCUG 31198 / JCM 15750 / NBRC 105917 / EY 4224 / RW1) (Sphingomonas wittichii).